Here is a 37-residue protein sequence, read N- to C-terminus: Cytochrome b6-f complex subunit 5 (37 aa).

Residues 5–25 traverse the membrane as a helical segment; it reads LLCGIVLGLIPVTLLGLFVAA.

Belongs to the PetG family. The 4 large subunits of the cytochrome b6-f complex are cytochrome b6, subunit IV (17 kDa polypeptide, PetD), cytochrome f and the Rieske protein, while the 4 small subunits are PetG, PetL, PetM and PetN. The complex functions as a dimer.

The protein localises to the cellular thylakoid membrane. Component of the cytochrome b6-f complex, which mediates electron transfer between photosystem II (PSII) and photosystem I (PSI), cyclic electron flow around PSI, and state transitions. PetG is required for either the stability or assembly of the cytochrome b6-f complex. The protein is Cytochrome b6-f complex subunit 5 of Synechococcus sp. (strain WH7803).